The following is a 312-amino-acid chain: Gamma-soluble NSF attachment protein (312 aa).

Positions 281 to 312 (KKKSPATPQAKPDGVTATAADEEEDEYSGGLC) are disordered. A Phosphoserine modification is found at S284. Phosphothreonine is present on T287. Residues 300-312 (ADEEEDEYSGGLC) are compositionally biased toward acidic residues. S308 is modified (phosphoserine).

The protein belongs to the SNAP family. As to quaternary structure, interacts with RAB11FIP5. Interacts with VTI1A.

It is found in the membrane. It localises to the golgi apparatus. Functionally, required for vesicular transport between the endoplasmic reticulum and the Golgi apparatus. This Homo sapiens (Human) protein is Gamma-soluble NSF attachment protein.